The following is a 424-amino-acid chain: Histidine--tRNA ligase (424 aa).

Belongs to the class-II aminoacyl-tRNA synthetase family. In terms of assembly, homodimer.

The protein resides in the cytoplasm. It carries out the reaction tRNA(His) + L-histidine + ATP = L-histidyl-tRNA(His) + AMP + diphosphate + H(+). This Escherichia coli O127:H6 (strain E2348/69 / EPEC) protein is Histidine--tRNA ligase.